We begin with the raw amino-acid sequence, 501 residues long: Bifunctional pantoate ligase/cytidylate kinase (501 aa).

The tract at residues M1–S264 is pantoate--beta-alanine ligase. Position 25–32 (M25–H32) interacts with ATP. The active-site Proton donor is H32. Q55 contacts (R)-pantoate. Q55 is a beta-alanine binding site. An ATP-binding site is contributed by G144–D147. Residue Q150 coordinates (R)-pantoate. ATP-binding positions include V173 and L181 to R184. The interval F265 to G501 is cytidylate kinase.

In the N-terminal section; belongs to the pantothenate synthetase family. It in the C-terminal section; belongs to the cytidylate kinase family. Type 1 subfamily.

Its subcellular location is the cytoplasm. It carries out the reaction (R)-pantoate + beta-alanine + ATP = (R)-pantothenate + AMP + diphosphate + H(+). It catalyses the reaction CMP + ATP = CDP + ADP. The catalysed reaction is dCMP + ATP = dCDP + ADP. Its pathway is cofactor biosynthesis; (R)-pantothenate biosynthesis; (R)-pantothenate from (R)-pantoate and beta-alanine: step 1/1. Catalyzes the condensation of pantoate with beta-alanine in an ATP-dependent reaction via a pantoyl-adenylate intermediate. Its function is as follows. Catalyzes the transfer of a phosphate group from ATP to either CMP or dCMP to form CDP or dCDP and ADP, respectively. The polypeptide is Bifunctional pantoate ligase/cytidylate kinase (Parasynechococcus marenigrum (strain WH8102)).